Reading from the N-terminus, the 309-residue chain is Manganese ABC transporter substrate-binding lipoprotein PsaA (309 aa).

A signal peptide spans 1 to 19 (MKKLGTLFVLFLSVIVLVA). Cys20 carries N-palmitoyl cysteine lipidation. Residue Cys20 is the site of S-diacylglycerol cysteine attachment. Mn(2+) is bound by residues His67, His139, Glu205, and Asp280.

This sequence belongs to the bacterial solute-binding protein 9 family. Lipoprotein receptor antigen (Lrai) subfamily.

It localises to the cell membrane. Its function is as follows. Part of the ATP-riven (ABC) transport system PsaABC involved in manganese import. Binds manganese with high affinity and specificity and delivers it to the membrane permease for translocation into the cytoplasm. Also acts as an adhesin which is involved on adherence to extracellular matrix. The chain is Manganese ABC transporter substrate-binding lipoprotein PsaA (psaA) from Streptococcus mitis.